The chain runs to 547 residues: Chaperonin GroEL (547 aa).

ATP-binding positions include 30–33 (TLGP), K51, 87–91 (DGTTT), G415, 479–481 (NAA), and D495.

It belongs to the chaperonin (HSP60) family. In terms of assembly, forms a cylinder of 14 subunits composed of two heptameric rings stacked back-to-back. Interacts with the co-chaperonin GroES.

It localises to the cytoplasm. It catalyses the reaction ATP + H2O + a folded polypeptide = ADP + phosphate + an unfolded polypeptide.. Together with its co-chaperonin GroES, plays an essential role in assisting protein folding. The GroEL-GroES system forms a nano-cage that allows encapsulation of the non-native substrate proteins and provides a physical environment optimized to promote and accelerate protein folding. In Cupriavidus taiwanensis (strain DSM 17343 / BCRC 17206 / CCUG 44338 / CIP 107171 / LMG 19424 / R1) (Ralstonia taiwanensis (strain LMG 19424)), this protein is Chaperonin GroEL.